The primary structure comprises 602 residues: Multicopper oxidase aurL2 (602 aa).

The first 17 residues, 1-17 (MLFRFLALLPFVAGAFA), serve as a signal peptide directing secretion. 2 consecutive Plastocyanin-like domains span residues 38 to 149 (DIKI…VRDA) and 160 to 317 (IPLL…KYRC). Asn-52 and Asn-80 each carry an N-linked (GlcNAc...) asparagine glycan. Cu cation contacts are provided by His-84, His-86, His-130, and His-132. Residues Asn-201, Asn-247, Asn-337, Asn-383, Asn-387, Asn-419, and Asn-424 are each glycosylated (N-linked (GlcNAc...) asparagine). One can recognise a Plastocyanin-like 3 domain in the interval 421–556 (TTPNYTLALE…QVMGMATVWV (136 aa)). Residue His-469 coordinates Cu cation. 2 N-linked (GlcNAc...) asparagine glycosylation sites follow: Asn-482 and Asn-486.

The protein belongs to the multicopper oxidase family.

It participates in pigment biosynthesis. Functionally, multicopper oxidase; part of the gene cluster that mediates the biosynthesis of aurofusarin, a red mycelium pigment which is acting as a mycotoxin. The first step is performed by the polyketide synthase which condenses one acetyl-CoA and 6 malonyl-CoA units to form the first intermediate, the cyclic heptaketide and yellow pigment YWA1. The C2 hydroxyl group in the pyrone ring of YWA1 is probably formed during ring closure by an aldol-type cyclization reaction. The dehydratase aurZ then acts as the first tailoring enzyme in the aurofusarin biosynthetic pathway by converting YWA1 to nor-rubrofusarin. Nor-rubrofusarin is then methylated to rubrofusarin by the O-methyltransferase aurJ. Rubrofusarin is then transported across the plasma membrane by the rubrofusarin-specific pump aurT for further enzymatic processing by the extracellular complex composed of GIP1, aurF, aurO and aurS to yield aurofusarin. This chain is Multicopper oxidase aurL2 (aurL2), found in Gibberella zeae (strain ATCC MYA-4620 / CBS 123657 / FGSC 9075 / NRRL 31084 / PH-1) (Wheat head blight fungus).